A 927-amino-acid polypeptide reads, in one-letter code: Bifunctional glutamine synthetase adenylyltransferase/adenylyl-removing enzyme (927 aa).

Residues 1–428 (MTMTDASDLL…AQFDQVFADK (428 aa)) form an adenylyl removase region. The interval 438–927 (DQAAGCIWSG…AALWARVFGA (490 aa)) is adenylyl transferase.

It belongs to the GlnE family. Requires Mg(2+) as cofactor.

It catalyses the reaction [glutamine synthetase]-O(4)-(5'-adenylyl)-L-tyrosine + phosphate = [glutamine synthetase]-L-tyrosine + ADP. The enzyme catalyses [glutamine synthetase]-L-tyrosine + ATP = [glutamine synthetase]-O(4)-(5'-adenylyl)-L-tyrosine + diphosphate. Involved in the regulation of glutamine synthetase GlnA, a key enzyme in the process to assimilate ammonia. When cellular nitrogen levels are high, the C-terminal adenylyl transferase (AT) inactivates GlnA by covalent transfer of an adenylyl group from ATP to specific tyrosine residue of GlnA, thus reducing its activity. Conversely, when nitrogen levels are low, the N-terminal adenylyl removase (AR) activates GlnA by removing the adenylyl group by phosphorolysis, increasing its activity. The regulatory region of GlnE binds the signal transduction protein PII (GlnB) which indicates the nitrogen status of the cell. This Burkholderia pseudomallei (strain K96243) protein is Bifunctional glutamine synthetase adenylyltransferase/adenylyl-removing enzyme.